Here is a 552-residue protein sequence, read N- to C-terminus: 5'-AMP-activated protein kinase catalytic subunit alpha-2 (552 aa).

In terms of domain architecture, Protein kinase spans 16–268 (YVLGDTLGVG…IKDIREHEWF (253 aa)). ATP-binding positions include 22-30 (LGVGTFGKV) and Lys-45. Asp-139 serves as the catalytic Proton acceptor. Thr-172 is subject to Phosphothreonine; by LKB1 and CaMKK2. Thr-258 carries the post-translational modification Phosphothreonine. An AIS region spans residues 291–376 (EAVKEVCEKF…PERMPPLIAD (86 aa)). Position 377 is a phosphoserine (Ser-377). Residues 478–519 (EQRSGSSTPQRSCSAAGLHRPRSSLDSVTAESHSLSGSLSGS) form a disordered region. Over residues 480–490 (RSGSSTPQRSC) the composition is skewed to polar residues. Ser-491 carries the post-translational modification Phosphoserine. Over residues 509–519 (SHSLSGSLSGS) the composition is skewed to low complexity.

It belongs to the protein kinase superfamily. CAMK Ser/Thr protein kinase family. SNF1 subfamily. As to quaternary structure, AMPK is a heterotrimer of an alpha catalytic subunit (PRKAA1 or PRKAA2), a beta (PRKAB1 or PRKAB2) and a gamma non-catalytic subunits (PRKAG1, PRKAG2 or PRKAG3). Interacts with FNIP1 and FNIP2. Interacts with DUSP29. Interacts with ARF6. The phosphorylated form at Thr-172 mediated by CamKK2 interacts with ACSS2. Requires Mg(2+) as cofactor. In terms of processing, ubiquitinated. Phosphorylated at Thr-172 by STK11/LKB1 in complex with STE20-related adapter-alpha (STRADA) pseudo kinase and CAB39. Also phosphorylated at Thr-172 by CAMKK2; triggered by a rise in intracellular calcium ions, without detectable changes in the AMP/ATP ratio. CAMKK1 can also phosphorylate Thr-172, but at much lower level. Dephosphorylated by protein phosphatase 2A and 2C (PP2A and PP2C). Phosphorylated by ULK1; leading to negatively regulate AMPK activity and suggesting the existence of a regulatory feedback loop between ULK1 and AMPK. Dephosphorylated by PPM1A and PPM1B at Thr-172 (mediated by STK11/LKB1).

It localises to the cytoplasm. Its subcellular location is the nucleus. It carries out the reaction L-seryl-[protein] + ATP = O-phospho-L-seryl-[protein] + ADP + H(+). It catalyses the reaction L-threonyl-[protein] + ATP = O-phospho-L-threonyl-[protein] + ADP + H(+). The catalysed reaction is L-seryl-[acetyl-CoA carboxylase] + ATP = O-phospho-L-seryl-[acetyl-CoA carboxylase] + ADP + H(+). The enzyme catalyses L-seryl-[3-hydroxy-3-methylglutaryl-coenzyme A reductase] + ATP = O-phospho-L-seryl-[3-hydroxy-3-methylglutaryl-coenzyme A reductase] + ADP + H(+). With respect to regulation, activated by phosphorylation on Thr-172. Binding of AMP to non-catalytic gamma subunit (PRKAG1, PRKAG2 or PRKAG3) results in allosteric activation, inducing phosphorylation on Thr-172. AMP-binding to gamma subunit also sustains activity by preventing dephosphorylation of Thr-172. ADP also stimulates Thr-172 phosphorylation, without stimulating already phosphorylated AMPK. ATP promotes dephosphorylation of Thr-172, rendering the enzyme inactive. Under physiological conditions AMPK mainly exists in its inactive form in complex with ATP, which is much more abundant than AMP. Selectively inhibited by compound C (6-[4-(2-Piperidin-1-yl-ethoxy)-phenyl)]-3-pyridin-4-yl-pyyrazolo[1,5-a] pyrimidine. Activated by resveratrol, a natural polyphenol present in red wine, and S17834, a synthetic polyphenol. Salicylate/aspirin directly activates kinase activity, primarily by inhibiting Thr-172 dephosphorylation. Its function is as follows. Catalytic subunit of AMP-activated protein kinase (AMPK), an energy sensor protein kinase that plays a key role in regulating cellular energy metabolism. In response to reduction of intracellular ATP levels, AMPK activates energy-producing pathways and inhibits energy-consuming processes: inhibits protein, carbohydrate and lipid biosynthesis, as well as cell growth and proliferation. AMPK acts via direct phosphorylation of metabolic enzymes, and by longer-term effects via phosphorylation of transcription regulators. Regulates lipid synthesis by phosphorylating and inactivating lipid metabolic enzymes such as ACACA, ACACB, GYS1, HMGCR and LIPE; regulates fatty acid and cholesterol synthesis by phosphorylating acetyl-CoA carboxylase (ACACA and ACACB) and hormone-sensitive lipase (LIPE) enzymes, respectively. Promotes lipolysis of lipid droplets by mediating phosphorylation of isoform 1 of CHKA (CHKalpha2). Regulates insulin-signaling and glycolysis by phosphorylating IRS1, PFKFB2 and PFKFB3. Involved in insulin receptor/INSR internalization. AMPK stimulates glucose uptake in muscle by increasing the translocation of the glucose transporter SLC2A4/GLUT4 to the plasma membrane, possibly by mediating phosphorylation of TBC1D4/AS160. Regulates transcription and chromatin structure by phosphorylating transcription regulators involved in energy metabolism such as CRTC2/TORC2, FOXO3, histone H2B, HDAC5, MEF2C, MLXIPL/ChREBP, EP300, HNF4A, p53/TP53, SREBF1, SREBF2 and PPARGC1A. Acts as a key regulator of glucose homeostasis in liver by phosphorylating CRTC2/TORC2, leading to CRTC2/TORC2 sequestration in the cytoplasm. In response to stress, phosphorylates 'Ser-36' of histone H2B (H2BS36ph), leading to promote transcription. Acts as a key regulator of cell growth and proliferation by phosphorylating FNIP1, TSC2, RPTOR, WDR24 and ATG1/ULK1: in response to nutrient limitation, negatively regulates the mTORC1 complex by phosphorylating RPTOR component of the mTORC1 complex and by phosphorylating and activating TSC2. Also phosphorylates and inhibits GATOR2 subunit WDR24 in response to nutrient limitation, leading to suppress glucose-mediated mTORC1 activation. In response to energetic stress, phosphorylates FNIP1, inactivating the non-canonical mTORC1 signaling, thereby promoting nuclear translocation of TFEB and TFE3, and inducing transcription of lysosomal or autophagy genes. In response to nutrient limitation, promotes autophagy by phosphorylating and activating ATG1/ULK1. In that process also activates WDR45/WIPI4. Phosphorylates CASP6, thereby preventing its autoprocessing and subsequent activation. AMPK also acts as a regulator of circadian rhythm by mediating phosphorylation of CRY1, leading to destabilize it. May regulate the Wnt signaling pathway by phosphorylating CTNNB1, leading to stabilize it. Also acts as a regulator of cellular polarity by remodeling the actin cytoskeleton; probably by indirectly activating myosin. Also phosphorylates CFTR, EEF2K, KLC1, NOS3 and SLC12A1. Plays an important role in the differential regulation of pro-autophagy (composed of PIK3C3, BECN1, PIK3R4 and UVRAG or ATG14) and non-autophagy (composed of PIK3C3, BECN1 and PIK3R4) complexes, in response to glucose starvation. Can inhibit the non-autophagy complex by phosphorylating PIK3C3 and can activate the pro-autophagy complex by phosphorylating BECN1. Upon glucose starvation, promotes ARF6 activation in a kinase-independent manner leading to cell migration. Upon glucose deprivation mediates the phosphorylation of ACSS2 at 'Ser-659', which exposes the nuclear localization signal of ACSS2, required for its interaction with KPNA1 and nuclear translocation. Upon stress, regulates mitochondrial fragmentation through phosphorylation of MTFR1L. This chain is 5'-AMP-activated protein kinase catalytic subunit alpha-2 (PRKAA2), found in Sus scrofa (Pig).